The chain runs to 236 residues: Small ribosomal subunit protein eS6 (236 aa).

Phosphoserine is present on residues Ser232 and Ser233.

It belongs to the eukaryotic ribosomal protein eS6 family. Phosphorylated.

In Debaryomyces hansenii (strain ATCC 36239 / CBS 767 / BCRC 21394 / JCM 1990 / NBRC 0083 / IGC 2968) (Yeast), this protein is Small ribosomal subunit protein eS6 (RPS6).